Reading from the N-terminus, the 954-residue chain is Calsyntenin-1 (954 aa).

A signal peptide spans 1-25 (MRIRGVKPFASAVGLLLGLLYAVDA). Over 26-833 (AKVNKHKPWI…THQASVVPSA (808 aa)) the chain is Extracellular. 2 Cadherin domains span residues 35–151 (IETT…SPVF) and 152–252 (KEKS…KPSW). N-linked (GlcNAc...) asparagine glycosylation is found at Asn333, Asn353, and Asn552. A helical membrane pass occupies residues 834–854 (ATIVIVVCVSFLVFMIILGVF). At 855–954 (RIRAAHQRTM…LEWDDSTLTY (100 aa)) the chain is on the cytoplasmic side. A disordered region spans residues 891-954 (TYEDQHSSEE…LEWDDSTLTY (64 aa)). Residues 900 to 935 (EEGDEEEEESEDGEEEDDITSAESDSSEDEAGEQED) show a composition bias toward acidic residues.

The protein belongs to the calsyntenin family. In terms of assembly, homooligomer and heterooligomer; mediates both homophilic and heterophilc interactions with clstn2 and clstn3 paralogs via cadherin domains. As to expression, by 48 hours post-fertilization (hpf), widely expressed in the brain, with strong expression in the telencephalon and the midbrain.

It is found in the postsynaptic cell membrane. The protein resides in the endoplasmic reticulum membrane. Its subcellular location is the golgi apparatus membrane. It localises to the cell projection. The protein localises to the neuron projection. In terms of biological role, postsynaptic adhesion molecule involved in vesicle trafficking; required for branching of peripheral but not central axons of sensory neurons. Promotes synapse development by acting as a cell adhesion molecule at the postsynaptic membrane, which associates with presynaptic neurexins. This Danio rerio (Zebrafish) protein is Calsyntenin-1.